We begin with the raw amino-acid sequence, 168 residues long: Endoribonuclease YbeY (168 aa).

Residues H122, H126, and H132 each contribute to the Zn(2+) site.

This sequence belongs to the endoribonuclease YbeY family. Zn(2+) is required as a cofactor.

The protein localises to the cytoplasm. In terms of biological role, single strand-specific metallo-endoribonuclease involved in late-stage 70S ribosome quality control and in maturation of the 3' terminus of the 16S rRNA. The polypeptide is Endoribonuclease YbeY (Brucella abortus (strain 2308)).